A 193-amino-acid polypeptide reads, in one-letter code: Probable GTP-binding protein EngB (193 aa).

An EngB-type G domain is found at 22–193 (LLPEVALAGR…AAWEAIYRHL (172 aa)). GTP-binding positions include 30–37 (GRSNVGKS), 57–61 (GKTQT), 75–78 (DVPG), 142–145 (TKLD), and 174–176 (FSS). Residues serine 37 and threonine 59 each contribute to the Mg(2+) site.

This sequence belongs to the TRAFAC class TrmE-Era-EngA-EngB-Septin-like GTPase superfamily. EngB GTPase family. It depends on Mg(2+) as a cofactor.

In terms of biological role, necessary for normal cell division and for the maintenance of normal septation. This is Probable GTP-binding protein EngB from Exiguobacterium sibiricum (strain DSM 17290 / CCUG 55495 / CIP 109462 / JCM 13490 / 255-15).